We begin with the raw amino-acid sequence, 473 residues long: Photosystem II CP43 reaction center protein (473 aa).

Residues 1-14 (MKTLYSLRRFYHVE) constitute a propeptide that is removed on maturation. Threonine 15 is modified (N-acetylthreonine). Threonine 15 carries the post-translational modification Phosphothreonine. Helical transmembrane passes span 69–93 (LFEV…PHLA), 134–155 (LLGP…KDRN), 178–200 (KALY…RKIT), 255–275 (KPFA…LSYS), and 291–312 (WFNN…ASQA). Glutamate 367 contacts [CaMn4O5] cluster. A helical transmembrane segment spans residues 447–471 (RARAAAAGFEKGIDRDFEPVLSMTP).

Belongs to the PsbB/PsbC family. PsbC subfamily. PSII is composed of 1 copy each of membrane proteins PsbA, PsbB, PsbC, PsbD, PsbE, PsbF, PsbH, PsbI, PsbJ, PsbK, PsbL, PsbM, PsbT, PsbX, PsbY, PsbZ, Psb30/Ycf12, at least 3 peripheral proteins of the oxygen-evolving complex and a large number of cofactors. It forms dimeric complexes. Requires Binds multiple chlorophylls and provides some of the ligands for the Ca-4Mn-5O cluster of the oxygen-evolving complex. It may also provide a ligand for a Cl- that is required for oxygen evolution. PSII binds additional chlorophylls, carotenoids and specific lipids. as cofactor.

It localises to the plastid. The protein resides in the chloroplast thylakoid membrane. Functionally, one of the components of the core complex of photosystem II (PSII). It binds chlorophyll and helps catalyze the primary light-induced photochemical processes of PSII. PSII is a light-driven water:plastoquinone oxidoreductase, using light energy to abstract electrons from H(2)O, generating O(2) and a proton gradient subsequently used for ATP formation. The polypeptide is Photosystem II CP43 reaction center protein (Arabis hirsuta (Hairy rock-cress)).